Here is a 241-residue protein sequence, read N- to C-terminus: Sec-independent protein translocase protein TatC (241 aa).

The next 6 helical transmembrane spans lie at 27-47 (LIIVIAVTLLLMLAIFPFSAG), 76-96 (LTMCFIGAITVGFPLLVYEAF), 122-142 (FVAGGLVAYFVTLPLFFSIVI), 161-181 (IVTNFVAGLGLVFQVPLIIVL), 193-213 (LVKGRLGVYGLLFGVAMFFSP), and 217-237 (LFSQLIVLAVLAILFEVSMVL).

It belongs to the TatC family. As to quaternary structure, forms a complex with TatA.

The protein resides in the cell membrane. In terms of biological role, part of the twin-arginine translocation (Tat) system that transports large folded proteins containing a characteristic twin-arginine motif in their signal peptide across membranes. In Methanocella arvoryzae (strain DSM 22066 / NBRC 105507 / MRE50), this protein is Sec-independent protein translocase protein TatC.